The sequence spans 689 residues: Glycine--tRNA ligase beta subunit (689 aa).

Belongs to the class-II aminoacyl-tRNA synthetase family. In terms of assembly, tetramer of two alpha and two beta subunits.

The protein resides in the cytoplasm. The catalysed reaction is tRNA(Gly) + glycine + ATP = glycyl-tRNA(Gly) + AMP + diphosphate. This Mannheimia succiniciproducens (strain KCTC 0769BP / MBEL55E) protein is Glycine--tRNA ligase beta subunit.